We begin with the raw amino-acid sequence, 132 residues long: Agouti-signaling protein (132 aa).

An N-terminal signal peptide occupies residues 1–22 (MDVTRLLLATLLVFLCFFTAYS). N-linked (GlcNAc...) asparagine glycosylation occurs at asparagine 39. The interval 61–87 (QISRKEAEKKRSSKKEASMKKVARPRT) is disordered. Basic and acidic residues predominate over residues 63–79 (SRKEAEKKRSSKKEASM). 5 disulfide bridges follow: cysteine 93/cysteine 108, cysteine 100/cysteine 114, cysteine 107/cysteine 125, cysteine 111/cysteine 132, and cysteine 116/cysteine 123. The region spanning 93–132 (CVTTRDSCKPPAPACCDPCASCQCRFFRSACSCRVLSLNC) is the Agouti domain.

The protein localises to the secreted. In terms of biological role, involved in the regulation of melanogenesis. The binding of ASP to MC1R precludes alpha-MSH initiated signaling and thus blocks production of cAMP, leading to a down-regulation of eumelanogenesis (brown/black pigment) and thus increasing synthesis of pheomelanin (yellow/red pigment). The protein is Agouti-signaling protein (ASIP) of Macaca silenus (Lion-tailed macaque).